A 363-amino-acid polypeptide reads, in one-letter code: Copper-containing nitrite reductase (363 aa).

A signal peptide spans 1 to 24; that stretch reads MSVFRSVLGACVLLGSCASSLALA. Plastocyanin-like domains lie at 25–193 and 194–363; these read GGAE…YDRV and YTIG…EPKQ. Residues His-113, His-118, His-153, Cys-154, His-163, Met-168, and His-324 each coordinate Cu cation.

Belongs to the multicopper oxidase family. In terms of assembly, homotrimer. It depends on Cu(2+) as a cofactor. Cu(+) serves as cofactor. The cofactor is FAD.

It localises to the periplasm. It carries out the reaction nitric oxide + Fe(III)-[cytochrome c] + H2O = Fe(II)-[cytochrome c] + nitrite + 2 H(+). Its pathway is nitrogen metabolism; nitrate reduction (denitrification); dinitrogen from nitrate: step 2/4. The protein is Copper-containing nitrite reductase (nirK) of Pseudomonas chlororaphis (Pseudomonas aureofaciens).